The following is a 192-amino-acid chain: Flavin prenyltransferase UbiX (192 aa).

FMN contacts are provided by residues 10 to 12 (GAS), Ser36, 92 to 95 (SVAT), and Arg127. Dimethylallyl phosphate-binding residues include Tyr157 and Lys173.

The protein belongs to the UbiX/PAD1 family.

The catalysed reaction is dimethylallyl phosphate + FMNH2 = prenylated FMNH2 + phosphate. Functionally, flavin prenyltransferase that catalyzes the synthesis of the prenylated FMN cofactor (prenyl-FMN) for 4-hydroxy-3-polyprenylbenzoic acid decarboxylase UbiD. The prenyltransferase is metal-independent and links a dimethylallyl moiety from dimethylallyl monophosphate (DMAP) to the flavin N5 and C6 atoms of FMN. In Chlamydia muridarum (strain MoPn / Nigg), this protein is Flavin prenyltransferase UbiX.